Consider the following 398-residue polypeptide: T-box transcription factor TBX1 (398 aa).

The interval 23–72 is disordered; the sequence is AAGGFPGAASPGADPYGPREPPPPPPRYDPCAAAAPGAPGPPPPPHAYPF. The segment covering 29 to 38 has biased composition (low complexity); the sequence is GAASPGADPY. Composition is skewed to pro residues over residues 40-50 and 60-69; these read PREPPPPPPRY and APGPPPPPHA. The T-box DNA-binding region spans 119–297; it reads LWDEFNQLGT…SNPFAKGFRD (179 aa).

In terms of assembly, binds DNA as a dimer. Interacts with DSCR6. Interacts with NKX2-5.

Its subcellular location is the nucleus. Its function is as follows. Transcription factor that plays a key role in cardiovascular development by promoting pharyngeal arch segmentation during embryonic development. Also involved in craniofacial muscle development. Together with NKX2-5, acts as a regulator of asymmetric cardiac morphogenesis by promoting expression of PITX2. Acts upstream of TBX1 for the formation of the thymus and parathyroid glands from the third pharyngeal pouch. Required for hair follicle stem cell self-renewal. Binds to the palindromic T site 5'-TTCACACCTAGGTGTGAA-3' DNA sequence. The protein is T-box transcription factor TBX1 of Homo sapiens (Human).